A 1111-amino-acid polypeptide reads, in one-letter code: Cell death abnormality protein 1 (1111 aa).

Positions 1-18 (MRLILLVLLATWQVVVDT) are cleaved as a signal peptide. At 19–910 (RAPTFPDKLT…NGAGRSTGLT (892 aa)) the chain is on the extracellular side. Residues 41-113 (GDHVCTVKTI…QCCDGYYQTK (73 aa)) enclose the EMI domain. Intrachain disulfides connect C45–C106, C71–C80, C105–C117, C121–C130, C125–C136, C138–C147, C160–C172, C166–C179, C181–C190, C203–C215, C209–C221, C223–C232, C245–C257, C251–C264, and C266–C275. N-linked (GlcNAc...) asparagine glycosylation is present at N66. 4 consecutive EGF-like domains span residues 118 to 148 (LPDCNPPCKKGKCIEPGKCECDPGYGGKYCA), 156 to 191 (WGLGCSKSCDCENGANCDPELGTCICTSGFQGERCE), 199 to 233 (WGPNCVKSCPCQNGGKCNKEGKCVCSDGWGGEFCL), and 241 to 276 (FGAECKFECNCQNGATCDNTNGKCICKSGYHGALCE). N333 and N345 each carry an N-linked (GlcNAc...) asparagine glycan. The region spanning 421-458 (YGPNCEKQAMCDWNHASECNPETGSCVCKPGRTGKNCS) is the EGF-like 5 domain. 3 disulfides stabilise this stretch: C425-C439, C431-C446, and C448-C457. N456 carries an N-linked (GlcNAc...) asparagine glycan. One copy of the FU repeat lies at 629–680 (DQKCDPNTFGFLCQETVTPSPCASTDPKNGVCLSCPPGSSGIHCEHNCPAGS). The 36-residue stretch at 681-716 (YGDGCQQVCSCADGHGCDPTTGECICEPGYHGKTCS) folds into the EGF-like 6 domain. 3 disulfides stabilise this stretch: C685-C697, C691-C704, and C706-C715. Residues 911-931 (WFFVLLIVALCGGLGLIALFY) traverse the membrane as a helical segment. The segment at 931–1007 (YRNKYQKEKD…EEELENKKIH (77 aa)) is interaction with trim-21. Over 932–1111 (RNKYQKEKDP…KKRAQDNLYT (180 aa)) the chain is Cytoplasmic. Disordered regions lie at residues 940–993 (DPDM…PNGL) and 1006–1111 (IHGR…NLYT). Residues 962–965 (NPLY) carry the NPXY motif. Over residues 963–980 (PLYSRQSVFPDSDAFSSE) the composition is skewed to polar residues. The residue at position 1019 (Y1019) is a Phosphotyrosine; by SRC. The YXXL motif lies at 1019 to 1022 (YASL). Positions 1030–1039 (SSSSASASAS) are enriched in low complexity. Polar residues predominate over residues 1068–1083 (NSISPAHAVTTSNHNE).

In terms of assembly, interacts (via C-terminus) with ced-6 (via PTB domain). Interacts with nck-1; the interaction is required for ced-1 degradation through the proteasome pathway. Interacts with V-ATPase vha-10. Post-translationally, phosphorylation of Tyr-1019, within the YXXL motif, by src-1 is thought to initiate phagosomal formation. 'Lys-48'-linked polyubiquitination by trim-21 leads to proteasomal degradation. As to expression, expressed in engulfing cells and syncytium hypodermal cells. Ced-7 is necessary for clustering around cell corpses prior to engulfment.

The protein localises to the cell membrane. It is found in the cytoplasmic vesicle. It localises to the phagosome membrane. Its function is as follows. Involved in programmed cell death, also called apoptosis, in both somatic and germ cells. Acts by recruiting ced-6 to phagosomes which enables actin-dependent cytoskeletal reorganization and subsequent engulfment of the apoptotic cell corpse. Has a role in the association of ppk-3 and rab-7 with the phagosomal surface which is necessary for the incorporation of lysosomes to phagosomes during phagosome maturation. Activates the expression of unfolded protein response genes, which are involved in the immune response to live bacteria. This is Cell death abnormality protein 1 from Caenorhabditis elegans.